Consider the following 216-residue polypeptide: Probable calcium-binding protein CML35 (216 aa).

Residues 18–58 (TKSKASVSRSEPSSFSSNASSSSSDGSYGNLKQGPTATPIS) are disordered. A compositionally biased stretch (low complexity) spans 23–44 (SVSRSEPSSFSSNASSSSSDGS). 4 EF-hand domains span residues 66–101 (DFYT…LSHE), 103–138 (PSQE…TSGE), 141–176 (VETE…IGDE), and 178–213 (CTLE…AMND). The Ca(2+) site is built by Asp79, Asp81, Asp83, and Asp90. Residues Asp154, Asp156, Asn158, Lys160, Glu165, Asp191, Asn193, Asp195, and Asp202 each contribute to the Ca(2+) site.

Potential calcium sensor. The polypeptide is Probable calcium-binding protein CML35 (CML35) (Arabidopsis thaliana (Mouse-ear cress)).